Here is a 344-residue protein sequence, read N- to C-terminus: Anamorsin homolog 1 (344 aa).

The N-terminal SAM-like domain stretch occupies residues 1–169; sequence MANNVGVLLA…DTGSVFQIRK (169 aa). Residues 170 to 233 form a linker region; it reads KVSNQNGNFR…EDDLLTEEDL (64 aa). 4 residues coordinate [2Fe-2S] cluster: Cys-244, Cys-251, Cys-254, and Cys-256. The interval 244-256 is fe-S binding site A; sequence CAPTKKACKNCTC. 4 residues coordinate [4Fe-4S] cluster: Cys-282, Cys-285, Cys-293, and Cys-296. 2 consecutive short sequence motifs (cx2C motif) follow at residues 282 to 285 and 293 to 296; these read CGSC and CAGC. A fe-S binding site B region spans residues 282 to 296; the sequence is CGSCGLGDAFRCAGC.

It belongs to the anamorsin family. In terms of assembly, monomer. The cofactor is [2Fe-2S] cluster. [4Fe-4S] cluster serves as cofactor.

It is found in the cytoplasm. The protein localises to the mitochondrion intermembrane space. Its function is as follows. Component of the cytosolic iron-sulfur (Fe-S) protein assembly (CIA) machinery. Required for the maturation of extramitochondrial Fe-S proteins. Part of an electron transfer chain functioning in an early step of cytosolic Fe-S biogenesis, facilitating the de novo assembly of a [4Fe-4S] cluster on the cytosolic Fe-S scaffold complex. Electrons are transferred from NADPH via a FAD- and FMN-containing diflavin oxidoreductase. Together with the diflavin oxidoreductase, also required for the assembly of the diferric tyrosyl radical cofactor of ribonucleotide reductase (RNR), probably by providing electrons for reduction during radical cofactor maturation in the catalytic small subunit. This chain is Anamorsin homolog 1, found in Physcomitrium patens (Spreading-leaved earth moss).